A 682-amino-acid polypeptide reads, in one-letter code: Potassium-transporting ATPase ATP-binding subunit (682 aa).

4 helical membrane-spanning segments follow: residues 34 to 54, 62 to 82, 219 to 239, and 254 to 274; these read PVMFIVWIGSLLTTCISIAMA, ALFSAAISGWLWVTVLFANFA, IALTILLIALTIVFLLATATL, and VLVALLVCLIPTTIGGLLSAI. Aspartate 307 serves as the catalytic 4-aspartylphosphate intermediate. Residues aspartate 344, glutamate 348, 377-384, and lysine 395 contribute to the ATP site; that span reads FTAQSRMS. The Mg(2+) site is built by aspartate 518 and aspartate 522. A run of 3 helical transmembrane segments spans residues 588 to 608, 616 to 636, and 656 to 676; these read FAIIPAAFAATYPQLNALNIM, AILSAVIFNALIIVFLIPLAL, and IYGLGGLLVPFIGIKVIDLLL.

It belongs to the cation transport ATPase (P-type) (TC 3.A.3) family. Type IA subfamily. In terms of assembly, the system is composed of three essential subunits: KdpA, KdpB and KdpC.

It is found in the cell inner membrane. The catalysed reaction is K(+)(out) + ATP + H2O = K(+)(in) + ADP + phosphate + H(+). Its function is as follows. Part of the high-affinity ATP-driven potassium transport (or Kdp) system, which catalyzes the hydrolysis of ATP coupled with the electrogenic transport of potassium into the cytoplasm. This subunit is responsible for energy coupling to the transport system and for the release of the potassium ions to the cytoplasm. The polypeptide is Potassium-transporting ATPase ATP-binding subunit (Escherichia coli O6:K15:H31 (strain 536 / UPEC)).